The chain runs to 357 residues: Protein RecA (357 aa).

71–78 (GPESSGKT) lines the ATP pocket.

It belongs to the RecA family.

It is found in the cytoplasm. Functionally, can catalyze the hydrolysis of ATP in the presence of single-stranded DNA, the ATP-dependent uptake of single-stranded DNA by duplex DNA, and the ATP-dependent hybridization of homologous single-stranded DNAs. It interacts with LexA causing its activation and leading to its autocatalytic cleavage. This is Protein RecA from Ehrlichia canis (strain Jake).